The following is a 74-amino-acid chain: Control protein C.MunI (74 aa).

The 56-residue stretch at 12–67 folds into the HTH cro/C1-type domain; sequence LKKLRKEKTDLSQESFAAQIDLDRTYYSSIENGKRNVSLVNLEKISAGLGITLSEL. Residues 23–42 constitute a DNA-binding region (H-T-H motif); that stretch reads SQESFAAQIDLDRTYYSSIE.

In terms of biological role, probably controls expression of its associated restriction-modification system MunI. This Mycoplasma sp protein is Control protein C.MunI.